A 92-amino-acid chain; its full sequence is MTKLTQWLWGLALLGSAWAALTMGALGLELPFPCREVLWPLPAYLLVSAGCYALGTVGYRVATFHDCEDAARELQSQIVEARADLARRGLRF.

2 helical membrane-spanning segments follow: residues 8–28 (LWGL…ALGL) and 37–57 (VLWP…LGTV).

It belongs to the DPM3 family. Component of the dolichol-phosphate mannose (DPM) synthase complex composed of DPM1, DPM2 and DPM3; within the complex, associates with DPM1 via its C-terminal domain and with DPM2 via its N-terminal portion. This interaction stabilizes DPM1 protein.

The protein localises to the endoplasmic reticulum membrane. It functions in the pathway protein modification; protein glycosylation. Stabilizer subunit of the dolichol-phosphate mannose (DPM) synthase complex; tethers catalytic subunit DPM1 to the endoplasmic reticulum. The polypeptide is Dolichol-phosphate mannosyltransferase subunit 3 (Dpm3) (Mus musculus (Mouse)).